The chain runs to 132 residues: MIKKRKKNPYEASASGFYISMSAHKARRIIDQIRGRSYEETLMILELMPYRACYPIFKLVYSAAANASHNMGLNEASLVISKAEVNEGATMKKFKPRARGRSYLIKRPTCHISIVLEDISYEEYEEDFLRRI.

It belongs to the universal ribosomal protein uL22 family. In terms of assembly, part of the 50S ribosomal subunit.

Its subcellular location is the plastid. The protein localises to the chloroplast. In terms of biological role, this protein binds specifically to 23S rRNA. Functionally, the globular domain of the protein is located near the polypeptide exit tunnel on the outside of the subunit, while an extended beta-hairpin is found that lines the wall of the exit tunnel in the center of the 70S ribosome. The polypeptide is Large ribosomal subunit protein uL22c (rpl22) (Populus alba (White poplar)).